The primary structure comprises 477 residues: Cysteine--tRNA ligase (477 aa).

A Zn(2+)-binding site is contributed by C29. The 'HIGH' region signature appears at 31–41 (PTVYNYFHVGN). The Zn(2+) site is built by C209, H234, and E238. The 'KMSKS' region signature appears at 267 to 271 (KMSKS). ATP is bound at residue K270.

It belongs to the class-I aminoacyl-tRNA synthetase family. In terms of assembly, monomer. Zn(2+) is required as a cofactor.

It localises to the cytoplasm. The enzyme catalyses tRNA(Cys) + L-cysteine + ATP = L-cysteinyl-tRNA(Cys) + AMP + diphosphate. The polypeptide is Cysteine--tRNA ligase (Desulfitobacterium hafniense (strain DSM 10664 / DCB-2)).